The sequence spans 189 residues: Peptidyl-tRNA hydrolase (189 aa).

Tyrosine 14 contributes to the tRNA binding site. The active-site Proton acceptor is histidine 19. TRNA is bound by residues tyrosine 64, asparagine 66, and asparagine 112.

This sequence belongs to the PTH family. In terms of assembly, monomer.

The protein localises to the cytoplasm. The enzyme catalyses an N-acyl-L-alpha-aminoacyl-tRNA + H2O = an N-acyl-L-amino acid + a tRNA + H(+). In terms of biological role, hydrolyzes ribosome-free peptidyl-tRNAs (with 1 or more amino acids incorporated), which drop off the ribosome during protein synthesis, or as a result of ribosome stalling. Functionally, catalyzes the release of premature peptidyl moieties from peptidyl-tRNA molecules trapped in stalled 50S ribosomal subunits, and thus maintains levels of free tRNAs and 50S ribosomes. In Brevibacillus brevis (strain 47 / JCM 6285 / NBRC 100599), this protein is Peptidyl-tRNA hydrolase.